A 611-amino-acid chain; its full sequence is UvrABC system protein C (611 aa).

Residues 6 to 84 (NNPGVYRMFN…IKRLRPRFNV (79 aa)) form the GIY-YIG domain. One can recognise a UVR domain in the interval 194–229 (QSVKDHLAAAMQAASADLDFEHAAVYRDRLAALSHV).

This sequence belongs to the UvrC family. In terms of assembly, interacts with UvrB in an incision complex.

It localises to the cytoplasm. Its function is as follows. The UvrABC repair system catalyzes the recognition and processing of DNA lesions. UvrC both incises the 5' and 3' sides of the lesion. The N-terminal half is responsible for the 3' incision and the C-terminal half is responsible for the 5' incision. This is UvrABC system protein C from Brucella abortus (strain 2308).